The chain runs to 244 residues: MTTLFISDLHLEESRPDITGAFLTFLRDKALGVERLYILGDFFEAWIGDDERTPLQEQVAAALREVRDTGTDIYLMHGNRDFLIGEDFCARAGAILLDDPTVVDLYGTPALLMHGDSLCTADVEYQKFRANMRNPQTVKMLLSRPLKDRQLMARQLREISMAKNQGKAETIMDVTPEEVVKELEAHNVQLMIHGHTHRPAIHELEANGRPARRIVLGDWDENVWWLEASKNQPVALRHQPLADF.

5 residues coordinate Mn(2+): aspartate 8, histidine 10, aspartate 41, asparagine 79, and histidine 114. 79–80 (NR) serves as a coordination point for substrate. Aspartate 122, serine 160, asparagine 164, lysine 167, and histidine 195 together coordinate substrate. Mn(2+) contacts are provided by histidine 195 and histidine 197.

It belongs to the LpxH family. Mn(2+) serves as cofactor.

Its subcellular location is the cell inner membrane. It catalyses the reaction UDP-2-N,3-O-bis[(3R)-3-hydroxytetradecanoyl]-alpha-D-glucosamine + H2O = 2-N,3-O-bis[(3R)-3-hydroxytetradecanoyl]-alpha-D-glucosaminyl 1-phosphate + UMP + 2 H(+). It participates in glycolipid biosynthesis; lipid IV(A) biosynthesis; lipid IV(A) from (3R)-3-hydroxytetradecanoyl-[acyl-carrier-protein] and UDP-N-acetyl-alpha-D-glucosamine: step 4/6. Its function is as follows. Hydrolyzes the pyrophosphate bond of UDP-2,3-diacylglucosamine to yield 2,3-diacylglucosamine 1-phosphate (lipid X) and UMP by catalyzing the attack of water at the alpha-P atom. Involved in the biosynthesis of lipid A, a phosphorylated glycolipid that anchors the lipopolysaccharide to the outer membrane of the cell. The protein is UDP-2,3-diacylglucosamine hydrolase of Marinobacter nauticus (strain ATCC 700491 / DSM 11845 / VT8) (Marinobacter aquaeolei).